The sequence spans 906 residues: Protein kintoun (906 aa).

Serine 376 is modified (phosphoserine). 2 disordered regions span residues glutamine 614–arginine 691 and arginine 793–methionine 906. A compositionally biased stretch (basic residues) spans lysine 618–arginine 631. The segment covering glutamate 639 to glutamine 655 has biased composition (basic and acidic residues). A compositionally biased stretch (basic residues) spans arginine 793–glutamine 808. Serine 812 carries the phosphoserine modification. The segment covering alanine 837–glycine 850 has biased composition (polar residues). 2 stretches are compositionally biased toward basic and acidic residues: residues histidine 851 to glycine 865 and asparagine 875 to alanine 887. Residues glutamate 894 to methionine 906 show a composition bias toward acidic residues.

This sequence belongs to the PIH1 family. Kintoun subfamily. Interacts with Pp1alpha-96A, Pp1-87B, Pp1-13C and flw.

It is found in the cytoplasm. Functionally, required for cytoplasmic pre-assembly of axonemal dyneins, thereby playing a central role in motility in cilia and flagella. Involved in pre-assembly of dynein arm complexes in the cytoplasm before intraflagellar transport loads them for the ciliary compartment. This chain is Protein kintoun, found in Drosophila virilis (Fruit fly).